The primary structure comprises 382 residues: S-adenosylmethionine synthase (382 aa).

Histidine 16 is an ATP binding site. Aspartate 18 lines the Mg(2+) pocket. Residue glutamate 44 participates in K(+) binding. L-methionine contacts are provided by glutamate 57 and glutamine 100. The flexible loop stretch occupies residues 100-110 (QSADIAIGVDE). Residues 165-167 (DAK), aspartate 240, 246-247 (RK), alanine 263, and lysine 267 contribute to the ATP site. Aspartate 240 contacts L-methionine. Position 271 (lysine 271) interacts with L-methionine.

The protein belongs to the AdoMet synthase family. As to quaternary structure, homotetramer; dimer of dimers. Mg(2+) is required as a cofactor. K(+) serves as cofactor.

It localises to the cytoplasm. It catalyses the reaction L-methionine + ATP + H2O = S-adenosyl-L-methionine + phosphate + diphosphate. It participates in amino-acid biosynthesis; S-adenosyl-L-methionine biosynthesis; S-adenosyl-L-methionine from L-methionine: step 1/1. Functionally, catalyzes the formation of S-adenosylmethionine (AdoMet) from methionine and ATP. The overall synthetic reaction is composed of two sequential steps, AdoMet formation and the subsequent tripolyphosphate hydrolysis which occurs prior to release of AdoMet from the enzyme. In Alcanivorax borkumensis (strain ATCC 700651 / DSM 11573 / NCIMB 13689 / SK2), this protein is S-adenosylmethionine synthase.